The primary structure comprises 122 residues: MIQTESYLDVADNSGARRVMCIKVLGGSHRRYAAVGDIIKVTVKEAIPRGKVKKGQVLKAVVVRTKKGVRRQDGSLIKFDDNAAVLLNNQDAPIGTRIFGPVTRELRGEKFMKIISLAPEVL.

It belongs to the universal ribosomal protein uL14 family. Part of the 50S ribosomal subunit. Forms a cluster with proteins L3 and L19. In the 70S ribosome, L14 and L19 interact and together make contacts with the 16S rRNA in bridges B5 and B8.

Its function is as follows. Binds to 23S rRNA. Forms part of two intersubunit bridges in the 70S ribosome. The protein is Large ribosomal subunit protein uL14 of Cellvibrio japonicus (strain Ueda107) (Pseudomonas fluorescens subsp. cellulosa).